Consider the following 272-residue polypeptide: Short-chain dehydrogenase reductase ATA1 (272 aa).

14–38 (IITGGARGIGAATARLFTENGAYVI) contacts NADP(+). Ser143 serves as a coordination point for substrate. The active-site Proton acceptor is Tyr156. NADP(+) is bound at residue Lys160.

The protein belongs to the short-chain dehydrogenases/reductases (SDR) family. As to expression, expressed specifically in tapetal cells.

Its function is as follows. May play a role in tapetum development. The polypeptide is Short-chain dehydrogenase reductase ATA1 (Arabidopsis thaliana (Mouse-ear cress)).